A 280-amino-acid chain; its full sequence is Large ribosomal subunit protein uL2 (280 aa).

2 disordered regions span residues 1–47 (MAIR…NVHG) and 224–280 (VVMN…SKKR). Positions 23–33 (EITRSTPEKSL) are enriched in basic and acidic residues. Over residues 37–47 (LPKKGGRNVHG) the composition is skewed to basic residues. Positions 258 to 268 (RNPNRYSNNMI) are enriched in polar residues. Basic residues predominate over residues 270-280 (QRRRTNKSKKR).

It belongs to the universal ribosomal protein uL2 family. As to quaternary structure, part of the 50S ribosomal subunit. Forms a bridge to the 30S subunit in the 70S ribosome.

Its function is as follows. One of the primary rRNA binding proteins. Required for association of the 30S and 50S subunits to form the 70S ribosome, for tRNA binding and peptide bond formation. It has been suggested to have peptidyltransferase activity; this is somewhat controversial. Makes several contacts with the 16S rRNA in the 70S ribosome. In Corynebacterium diphtheriae (strain ATCC 700971 / NCTC 13129 / Biotype gravis), this protein is Large ribosomal subunit protein uL2.